A 308-amino-acid polypeptide reads, in one-letter code: Ankyrin repeat and SOCS box protein 12 (308 aa).

ANK repeat units follow at residues 63-92 (IPGT…DVDS), 96-125 (KAQT…CPSG), 129-158 (NNCS…EANV), 171-200 (SCSG…DPDY), and 213-243 (QPRT…NIYL). The SOCS box domain occupies 268-308 (PRSLLSQTRLVIRRSLCRANQSQATDQLDIPPVLISYLKHQ).

The protein belongs to the ankyrin SOCS box (ASB) family. As to quaternary structure, interacts with CUL5 and RNF7.

The protein operates within protein modification; protein ubiquitination. Functionally, probable substrate-recognition component of a SCF-like ECS (Elongin-Cullin-SOCS-box protein) E3 ubiquitin-protein ligase complex which mediates the ubiquitination and subsequent proteasomal degradation of target proteins. The sequence is that of Ankyrin repeat and SOCS box protein 12 (Asb12) from Mus musculus (Mouse).